The primary structure comprises 228 residues: Histidine/lysine/arginine/ornithine transport system permease protein HisQ (228 aa).

Residues 1–12 are Periplasmic-facing; it reads MLYGFSGVILQG. A helical membrane pass occupies residues 13 to 33; it reads ALVTLELAISSVVLAVIIGLI. One can recognise an ABC transmembrane type-1 domain in the interval 13–212; it reads ALVTLELAIS…VFTTVSNGVL (200 aa). Topologically, residues 34 to 58 are cytoplasmic; the sequence is GAGGKLSQNRLSGLIFEGYTTLIRG. Residues 59–79 form a helical membrane-spanning segment; sequence VPDLVLMLLIFYGLQIALNTV. The Periplasmic segment spans residues 80-87; that stretch reads TEAMGVGQ. Residues 88–108 form a helical membrane-spanning segment; that stretch reads IDIDPMVAGIITLGFIYGAYF. Over 109-148 the chain is Cytoplasmic; it reads TETFRGAFMAVPKGHIEAATAFGFTRGQVFRRIMFPSMMR. Residues 149-171 form a helical membrane-spanning segment; it reads YALPGIGNNWQVILKSTALVSLL. The Periplasmic segment spans residues 172–194; the sequence is GLEDVVKATQLAGKSTWEPFYFA. The chain crosses the membrane as a helical span at residues 195 to 215; it reads IVCGVIYLVFTTVSNGVLLFL. Over 216-228 the chain is Cytoplasmic; that stretch reads ERRYSVGVKRADL.

It belongs to the binding-protein-dependent transport system permease family. HisMQ subfamily. The HisPMQJ complex is composed of two ATP-binding proteins (HisP), two transmembrane proteins (HisM and HisQ) and a solute-binding protein (HisJ). The HisPMQ-ArgT complex is composed of two ATP-binding proteins (HisP), two transmembrane proteins (HisM and HisQ) and a solute-binding protein (ArgT).

Its subcellular location is the cell inner membrane. In terms of biological role, part of the ABC transporter complex HisPMQJ involved in histidine transport. Is also part of the ABC transporter complex HisPMQ-ArgT involved in lysine/arginine/ornithine transport. Probably responsible for the translocation of the substrate across the membrane. The protein is Histidine/lysine/arginine/ornithine transport system permease protein HisQ (hisQ) of Escherichia coli (strain K12).